Consider the following 119-residue polypeptide: Holo-[acyl-carrier-protein] synthase (119 aa).

Mg(2+) is bound by residues aspartate 8 and glutamate 58.

It belongs to the P-Pant transferase superfamily. AcpS family. Mg(2+) serves as cofactor.

It is found in the cytoplasm. The enzyme catalyses apo-[ACP] + CoA = holo-[ACP] + adenosine 3',5'-bisphosphate + H(+). Its function is as follows. Transfers the 4'-phosphopantetheine moiety from coenzyme A to a Ser of acyl-carrier-protein. The protein is Holo-[acyl-carrier-protein] synthase of Streptococcus thermophilus (strain CNRZ 1066).